We begin with the raw amino-acid sequence, 2256 residues long: Death-inducer obliterator 1 (2256 aa).

Residue methionine 1 is modified to N-acetylmethionine. Positions methionine 1–lysine 25 are enriched in basic and acidic residues. Residues methionine 1 to proline 256 are disordered. 2 stretches are compositionally biased toward polar residues: residues serine 48 to leucine 59 and glutamate 96 to isoleucine 119. Phosphoserine is present on residues serine 58 and serine 112. Residues leucine 128 to glycine 142 show a composition bias toward basic and acidic residues. Positions glutamate 143 to serine 153 are enriched in acidic residues. Residue threonine 148 is modified to Phosphothreonine. Phosphoserine occurs at positions 149 and 151. Short sequence motifs (nuclear localization signal) lie at residues glutamine 162–glutamate 170 and glutamine 182–arginine 190. Basic and acidic residues predominate over residues arginine 169–leucine 178. 2 stretches are compositionally biased toward basic and acidic residues: residues glutamate 206–proline 216 and glutamate 246–proline 256. The PHD-type zinc-finger motif lies at alanine 265–leucine 319. Disordered regions lie at residues leucine 481–arginine 535, arginine 598–lysine 624, alanine 641–arginine 668, serine 778–serine 822, glutamine 856–serine 970, alanine 1011–glycine 1039, and proline 1197–leucine 1218. Polar residues predominate over residues glutamate 495–asparagine 506. Serine 522 carries the phosphoserine modification. The region spanning isoleucine 667–lysine 787 is the TFIIS central domain. Positions serine 778 to lysine 788 are enriched in basic and acidic residues. Residues proline 797–glutamine 812 show a composition bias toward acidic residues. Phosphoserine occurs at positions 802 and 806. Composition is skewed to basic and acidic residues over residues serine 875–serine 886 and glutamine 921–proline 935. Lysine 876 participates in a covalent cross-link: Glycyl lysine isopeptide (Lys-Gly) (interchain with G-Cter in SUMO2). The residue at position 886 (serine 886) is a Phosphoserine. The segment covering proline 937–glycine 962 has biased composition (low complexity). 3 positions are modified to phosphoserine: serine 1016, serine 1027, and serine 1035. The span at glutamate 1202–glutamine 1215 shows a compositional bias: basic and acidic residues. Tyrosine 1239 bears the Phosphotyrosine mark. The disordered stretch occupies residues aspartate 1245–threonine 1288. The residue at position 1252 (threonine 1252) is a Phosphothreonine. Over residues proline 1254–proline 1267 the composition is skewed to pro residues. Serine 1256 bears the Phosphoserine mark. The segment covering serine 1279–threonine 1288 has biased composition (low complexity). At serine 1307 the chain carries Phosphoserine. Disordered regions lie at residues lysine 1320–aspartate 1347, phenylalanine 1362–aspartate 1421, serine 1509–glutamate 1609, and glutamine 1630–alanine 2256. A compositionally biased stretch (acidic residues) spans leucine 1371–tyrosine 1387. Serine 1514 bears the Phosphoserine mark. Residues leucine 1526–asparagine 1546 show a composition bias toward polar residues. Basic and acidic residues predominate over residues leucine 1547–glutamine 1557. The span at proline 1649–leucine 1666 shows a compositional bias: low complexity. A compositionally biased stretch (pro residues) spans proline 1667–proline 1679. The segment covering threonine 1699–tyrosine 1712 has biased composition (polar residues). The residue at position 1726 (serine 1726) is a Phosphoserine. Positions phenylalanine 1783–proline 1792 are enriched in pro residues. At arginine 1848 the chain carries Omega-N-methylarginine. Positions phenylalanine 1855–glutamine 1869 are enriched in basic and acidic residues. Residues arginine 1904, arginine 1905, arginine 1988, arginine 1993, arginine 2004, arginine 2019, and arginine 2035 each carry the asymmetric dimethylarginine modification. Basic and acidic residues-rich tracts occupy residues glutamate 2081–aspartate 2113 and arginine 2123–threonine 2246.

In terms of assembly, interacts specifically (via PHD-type zinc finger) with histone H3 that is trimethylated at 'Lys-4' (H3K4me3), histone phosphorylation at 'Thr-3' or 'Thr-6' disrupts this binding and promotes translocation of DIDO1 from chromatin to the mitotic spindle during mitosis. As to expression, ubiquitous. Expressed at intermediate levels.

It localises to the cytoplasm. Its subcellular location is the nucleus. The protein localises to the cytoskeleton. The protein resides in the spindle. Functionally, required for early embryonic stem cell development. Putative transcription factor, weakly pro-apoptotic when overexpressed. The sequence is that of Death-inducer obliterator 1 (Dido1) from Mus musculus (Mouse).